We begin with the raw amino-acid sequence, 123 residues long: ATP synthase epsilon chain (123 aa).

It belongs to the ATPase epsilon chain family. F-type ATPases have 2 components, CF(1) - the catalytic core - and CF(0) - the membrane proton channel. CF(1) has five subunits: alpha(3), beta(3), gamma(1), delta(1), epsilon(1). CF(0) has three main subunits: a, b and c.

It localises to the cell inner membrane. In terms of biological role, produces ATP from ADP in the presence of a proton gradient across the membrane. The protein is ATP synthase epsilon chain of Helicobacter acinonychis (strain Sheeba).